A 588-amino-acid chain; its full sequence is Probable fumarate reductase Ifc3 (588 aa).

The N-terminal stretch at 1–22 (MKLKYLVSAMALVVLSSGTAMA) is a signal peptide. The heme c site is built by His31, Cys37, Cys40, His41, Cys58, Cys61, His62, His78, His81, Cys87, Cys90, His91, Gly93, His94, Cys101, Cys104, and His105. Residues 135 to 588 (AIAAGPSETT…DNAAKHALDK (454 aa)) form a flavoprotein-like region. FAD is bound by residues Ala154, Asp173, Asn181, Ser182, Gly187, and Gly188. Gly187 is a fumarate binding site. Position 187 (Gly187) interacts with succinate. Arg218 contributes to the heme c binding site. Residues Val295 and Asp361 each contribute to the FAD site. Succinate is bound by residues His382, Ser394, and Glu395. Fumarate contacts are provided by Ser394 and Glu395. The Proton donor role is filled by Arg419. Fumarate is bound at residue His521. His521 contributes to the succinate binding site. Glu551 contacts FAD. 2 residues coordinate fumarate: Arg561 and Gly564. Arg561 and Gly564 together coordinate succinate. 3 residues coordinate FAD: Gly564, Ala566, and Ile567.

As to quaternary structure, homodimer. FAD is required as a cofactor. The cofactor is heme c.

The protein localises to the periplasm. Its function is as follows. Flavocytochrome that catalyzes the reduction of fumarate to succinate in vitro. Is essentially unidirectional, catalyzing only fumarate reduction. In vitro, can use the artificial electron donor methyl viologen. May be involved in an alternative route for electron transport to Fe(3+). This chain is Probable fumarate reductase Ifc3, found in Shewanella frigidimarina (strain NCIMB 400).